Here is a 97-residue protein sequence, read N- to C-terminus: Aspartyl/glutamyl-tRNA(Asn/Gln) amidotransferase subunit C (97 aa).

It belongs to the GatC family. Heterotrimer of A, B and C subunits.

It catalyses the reaction L-glutamyl-tRNA(Gln) + L-glutamine + ATP + H2O = L-glutaminyl-tRNA(Gln) + L-glutamate + ADP + phosphate + H(+). The enzyme catalyses L-aspartyl-tRNA(Asn) + L-glutamine + ATP + H2O = L-asparaginyl-tRNA(Asn) + L-glutamate + ADP + phosphate + 2 H(+). Allows the formation of correctly charged Asn-tRNA(Asn) or Gln-tRNA(Gln) through the transamidation of misacylated Asp-tRNA(Asn) or Glu-tRNA(Gln) in organisms which lack either or both of asparaginyl-tRNA or glutaminyl-tRNA synthetases. The reaction takes place in the presence of glutamine and ATP through an activated phospho-Asp-tRNA(Asn) or phospho-Glu-tRNA(Gln). The protein is Aspartyl/glutamyl-tRNA(Asn/Gln) amidotransferase subunit C of Prochlorococcus marinus (strain MIT 9301).